Consider the following 396-residue polypeptide: General transcription factor IIH subunit 2 (396 aa).

One can recognise a VWFA domain in the interval 60–236 (HLYVVVDGSR…HYKELLARHV (177 aa)). At Tyr-95 the chain carries Phosphotyrosine. The C4-type zinc-finger motif lies at 292–309 (CPQCRAKYCELPVECKIC).

This sequence belongs to the GTF2H2 family. In terms of assembly, component of the TFIID-containing RNA polymerase II pre-initiation complex that is composed of TBP and at least GTF2A1, GTF2A2, GTF2E1, GTF2E2, GTF2F1, GTF2H2, GTF2H3, GTF2H4, GTF2H5, GTF2B, TCEA1, ERCC2 and ERCC3. Component of the 7-subunit TFIIH core complex composed of XPB/ERCC3, XPD/ERCC2, GTF2H1, GTF2H2, GTF2H3, GTF2H4 and GTF2H5, which is active in NER. The core complex associates with the 3-subunit CDK-activating kinase (CAK) module composed of CCNH/cyclin H, CDK7 and MNAT1 to form the 10-subunit holoenzyme (holo-TFIIH) active in transcription. Interacts with XPB, XPD, GTF2H1 and GTF2H3.

Its subcellular location is the nucleus. Component of the general transcription and DNA repair factor IIH (TFIIH) core complex, which is involved in general and transcription-coupled nucleotide excision repair (NER) of damaged DNA and, when complexed to CAK, in RNA transcription by RNA polymerase II. In NER, TFIIH acts by opening DNA around the lesion to allow the excision of the damaged oligonucleotide and its replacement by a new DNA fragment. In transcription, TFIIH has an essential role in transcription initiation. When the pre-initiation complex (PIC) has been established, TFIIH is required for promoter opening and promoter escape. Phosphorylation of the C-terminal tail (CTD) of the largest subunit of RNA polymerase II by the kinase module CAK controls the initiation of transcription. The N-terminus of GTF2H2 interacts with and regulates XPD whereas an intact C-terminus is required for a successful escape of RNAP II form the promoter. This Rattus norvegicus (Rat) protein is General transcription factor IIH subunit 2 (Gtf2h2).